Here is a 211-residue protein sequence, read N- to C-terminus: Large ribosomal subunit protein uL4 (211 aa).

Residues 40–87 (QQAHTRQGTASTLTRSEVRGGGRKPYKQKGTGRARQGSIRTPLRPGGG) are disordered. Positions 41–54 (QAHTRQGTASTLTR) are enriched in polar residues. Basic residues predominate over residues 60-71 (GGRKPYKQKGTG).

This sequence belongs to the universal ribosomal protein uL4 family. Part of the 50S ribosomal subunit.

One of the primary rRNA binding proteins, this protein initially binds near the 5'-end of the 23S rRNA. It is important during the early stages of 50S assembly. It makes multiple contacts with different domains of the 23S rRNA in the assembled 50S subunit and ribosome. Functionally, forms part of the polypeptide exit tunnel. In Synechococcus sp. (strain WH7803), this protein is Large ribosomal subunit protein uL4.